The sequence spans 406 residues: GTPase Obg (406 aa).

In terms of domain architecture, Obg spans 1-159 (MKFVDEVSIF…RDLKLELKVL (159 aa)). The segment at 126 to 149 (GNTRFKSSTNRAPRQTTPGKPGES) is disordered. Polar residues predominate over residues 129–143 (RFKSSTNRAPRQTTP). The OBG-type G domain maps to 160 to 333 (ADVGLLGLPN…ICRDIMHYLE (174 aa)). GTP-binding positions include 166–173 (GLPNAGKS), 191–195 (FTTLV), 213–216 (DIPG), 283–286 (NKMD), and 314–316 (SAI). 2 residues coordinate Mg(2+): serine 173 and threonine 193. The interval 376–406 (SGVRSVDDIDEDDDFFDDEDDDGPEIIYVRD) is disordered. Residues 383–399 (DIDEDDDFFDDEDDDGP) are compositionally biased toward acidic residues.

The protein belongs to the TRAFAC class OBG-HflX-like GTPase superfamily. OBG GTPase family. Monomer. Mg(2+) is required as a cofactor.

Its subcellular location is the cytoplasm. Its function is as follows. An essential GTPase which binds GTP, GDP and possibly (p)ppGpp with moderate affinity, with high nucleotide exchange rates and a fairly low GTP hydrolysis rate. Plays a role in control of the cell cycle, stress response, ribosome biogenesis and in those bacteria that undergo differentiation, in morphogenesis control. The chain is GTPase Obg from Ectopseudomonas mendocina (strain ymp) (Pseudomonas mendocina).